Here is a 172-residue protein sequence, read N- to C-terminus: Myosin regulatory light polypeptide 9 (172 aa).

A compositionally biased stretch (basic residues) spans 1 to 16 (MSSKRAKAKTTKKRPQ). Residues 1–20 (MSSKRAKAKTTKKRPQRATS) form a disordered region. At Ser2 the chain carries N-acetylserine. A Phosphothreonine; by MLCK, CIT and ROCK2 modification is found at Thr19. Ser20 carries the phosphoserine; by CDC42BP, CIT, MLCK, PAK1, ROCK1, ROCK2, DAPK1, DAPK2 and ZIPK/DAPK3 modification. 3 consecutive EF-hand domains span residues 29–64 (SQIQ…LGKN), 98–133 (DPED…MGDR), and 134–169 (FTDE…GAKD). Residues Asp42, Asn44, Asp46, and Asp53 each contribute to the Ca(2+) site.

As to quaternary structure, myosin is a hexamer of 2 heavy chains and 4 light chains: interacts with myosin heavy chain MYO19. Interacts with LUZP1; the interaction results in inhibition of phosphorylation of MYL9 by DAPK3. Post-translationally, phosphorylation increases the actin-activated myosin ATPase activity and thereby regulates the contractile activity. It is required to generate the driving force in the migration of the cells but not necessary for localization of myosin-2 at the leading edge. Phosphorylation is required for myotube formation. Phosphorylated by DAPK3; DAPK3-mediated phosphorylation is inhibited by LUZP1.

It localises to the cytoplasm. Its subcellular location is the cytoskeleton. The protein resides in the cell cortex. Myosin regulatory subunit that plays an important role in regulation of both smooth muscle and nonmuscle cell contractile activity via its phosphorylation. Implicated in cytokinesis, receptor capping, and cell locomotion. In myoblasts, regulates PIEZO1-dependent cortical actomyosin assembly involved in myotube formation. The chain is Myosin regulatory light polypeptide 9 (Myl9) from Mus musculus (Mouse).